The following is a 361-amino-acid chain: Teichoic acids export ATP-binding protein TagH (361 aa).

Residues threonine 13–glycine 246 form the ABC transporter domain. Position 60–67 (glycine 60–serine 67) interacts with ATP. Residues glutamine 247–lysine 361 are unknown.

This sequence belongs to the ABC transporter superfamily. Teichoic acids exporter (TC 3.A.1.104.1) family. The complex is composed of two ATP-binding proteins (TagH) and two transmembrane proteins (TagG).

It localises to the cell membrane. The enzyme catalyses ATP + H2O + teichoic acidSide 1 = ADP + phosphate + teichoic acidSide 2.. In terms of biological role, part of the ABC transporter complex TagGH involved in teichoic acids export. Responsible for energy coupling to the transport system. The polypeptide is Teichoic acids export ATP-binding protein TagH (Levilactobacillus brevis (strain ATCC 367 / BCRC 12310 / CIP 105137 / JCM 1170 / LMG 11437 / NCIMB 947 / NCTC 947) (Lactobacillus brevis)).